A 181-amino-acid polypeptide reads, in one-letter code: MGDPKRPKKKYVEGKPKRLWNSDLLMSELRLIGEYGLRNKKELWLARALLRSIKHRAREILSAPMEIRGEAEKRLKDRLFRMGLISDINIPLDSVLALDVTAVLERRLQTLVYRKGMARSIHEARQLIVHGHISINGVRVRSPGYLVPRNLEDGIGFAPTSRIVKAKVTQQVNQGGQAVNQ.

The 63-residue stretch at 106–168 folds into the S4 RNA-binding domain; that stretch reads RRLQTLVYRK…PTSRIVKAKV (63 aa).

It belongs to the universal ribosomal protein uS4 family. In terms of assembly, part of the 30S ribosomal subunit. Contacts protein S5. The interaction surface between S4 and S5 is involved in control of translational fidelity.

Functionally, one of the primary rRNA binding proteins, it binds directly to 16S rRNA where it nucleates assembly of the body of the 30S subunit. With S5 and S12 plays an important role in translational accuracy. This is Small ribosomal subunit protein uS4 from Caldivirga maquilingensis (strain ATCC 700844 / DSM 13496 / JCM 10307 / IC-167).